The chain runs to 479 residues: Glycerol kinase 5 (479 aa).

Ser20 and Ser21 together coordinate ATP. Positions 90, 267, and 268 each coordinate glycerol. ATP contacts are provided by Thr289, Gly332, and Gly432.

This sequence belongs to the FGGY kinase family.

It is found in the cytoplasm. It catalyses the reaction glycerol + ATP = sn-glycerol 3-phosphate + ADP + H(+). Its pathway is polyol metabolism; glycerol degradation via glycerol kinase pathway; sn-glycerol 3-phosphate from glycerol: step 1/1. Functionally, skin-specific kinase that plays a key role in glycerol metabolism, catalyzing its phosphorylation to produce sn-glycerol 3-phosphate. Involved in skin-specific regulation of sterol regulatory element-binding protein (SREBP) processing and lipid biosynthesis. The chain is Glycerol kinase 5 (gk5) from Xenopus laevis (African clawed frog).